A 523-amino-acid polypeptide reads, in one-letter code: Occludin (523 aa).

The segment at Met-1–Asn-20 is disordered. The Cytoplasmic portion of the chain corresponds to Met-1–Arg-66. The MARVEL domain occupies Ser-60–Arg-269. A helical membrane pass occupies residues Ile-67 to Leu-87. Residues Ala-88–Phe-140 are Extracellular-facing. Residues Leu-141 to Ile-161 form a helical membrane-spanning segment. The Cytoplasmic portion of the chain corresponds to Arg-162 to Leu-173. Residues Ile-174–Ile-194 form a helical membrane-spanning segment. Residues Met-195–Ala-244 lie on the Extracellular side of the membrane. Cys-216 and Cys-237 are disulfide-bonded. The chain crosses the membrane as a helical span at residues Ile-245–Val-265. Topologically, residues Lys-266–Thr-523 are cytoplasmic. Ser-302 bears the Phosphoserine mark. A disordered region spans residues Ser-302–Pro-338. Thr-305 bears the Phosphothreonine mark. Phosphoserine occurs at positions 313, 321, 340, and 360. Residues Asp-363–Glu-408 form a disordered region. A compositionally biased stretch (polar residues) spans Arg-368–Arg-381. Tyr-369 carries the post-translational modification Phosphotyrosine. 2 positions are modified to phosphoserine: Ser-370 and Ser-371. Residues Thr-382–Ala-391 show a composition bias toward basic residues. Over residues Lys-392–Thr-401 the composition is skewed to basic and acidic residues. A phosphotyrosine mark is found at Tyr-399 and Tyr-403. Residues Thr-404 and Thr-405 each carry the phosphothreonine; by PKC/PRKCH modification. Ser-409 bears the Phosphoserine mark. In terms of domain architecture, OCEL spans Glu-415–Thr-523. Positions Tyr-433 to Lys-489 form a coiled coil. Phosphoserine is present on Ser-491.

This sequence belongs to the ELL/occludin family. As to quaternary structure, interacts with TJP1/ZO1. Interacts with VAPA. Interacts with CLDN1, CLDN6, CLDN9, CLDN11, CLDN12 and CLDN17. Interacts with PLSCR1. Interacts with LSR, ILDR1 and ILDR2. Interacts with TJP2/ZO2. Post-translationally, dephosphorylated by PTPRJ.

It localises to the cell membrane. The protein localises to the cell junction. The protein resides in the tight junction. Functionally, may play a role in the formation and regulation of the tight junction (TJ) paracellular permeability barrier. May be involved in the organization of actin in endothelial cells. This is Occludin (Ocln) from Rattus norvegicus (Rat).